Reading from the N-terminus, the 629-residue chain is Methyl-accepting chemotaxis protein PctB (629 aa).

The Cytoplasmic segment spans residues 1 to 10 (MIKSLKFSHK). A helical transmembrane segment spans residues 11-31 (ILLAAALVVIATFSLFTLYND). Residues 32-276 (SLQRASIRED…AYAMLTKLRT (245 aa)) are Periplasmic-facing. The Cache domain occupies 37 to 260 (SIREDLEDYL…LSGLDWYIGI (224 aa)). Residues Tyr109, Ser115, Tyr121, 126–128 (RPW), Glu146, and Asp173 each bind L-arginine. Residues Ser115, Tyr121, 126 to 128 (RPW), 144 to 146 (YME), and Asp173 each bind L-glutamine. The helical transmembrane segment at 277-297 (SAIVAALIAVVAIVLLLGMLI) threads the bilayer. In terms of domain architecture, HAMP spans 298–352 (RVLMQPLTDMGRAMQDIAQGEGDLTKRLKVTSNDEFGALAISFNRFVERIHESIR). The Cytoplasmic segment spans residues 298 to 629 (RVLMQPLTDM…LRQLVDSFKI (332 aa)). The 237-residue stretch at 357-593 (TARQLHDVAQ…SLNMDITEIN (237 aa)) folds into the Methyl-accepting transducer domain. A disordered region spans residues 405-424 (RNAADASHHASDANHQAEDG). The segment covering 410-424 (ASHHASDANHQAEDG) has biased composition (basic and acidic residues).

This sequence belongs to the methyl-accepting chemotaxis (MCP) protein family. In terms of assembly, monomer in the absence and presence of ligands.

The protein localises to the cell inner membrane. Chemotactic-signal transducers respond to changes in the concentration of attractants and repellents in the environment, transduce a signal from the outside to the inside of the cell, and facilitate sensory adaptation through the variation of the level of methylation. Responds to L-Arg, L-Gln, L-Ala, L-Glu, L-Lys, L-Met and L-Tyr. Also involved in repellent responses to trichloroethylene (TCE), chloroform and methylthiocyanate. The polypeptide is Methyl-accepting chemotaxis protein PctB (pctB) (Pseudomonas aeruginosa (strain ATCC 15692 / DSM 22644 / CIP 104116 / JCM 14847 / LMG 12228 / 1C / PRS 101 / PAO1)).